The sequence spans 292 residues: UPF0696 protein C11orf68 homolog (292 aa).

Low complexity predominate over residues Met1–Gly10. Positions Met1–Gly60 are disordered. Positions Ala11–Asp20 are enriched in gly residues. Residues Glu35–Pro44 show a composition bias toward basic and acidic residues.

It belongs to the UPF0696 family.

The chain is UPF0696 protein C11orf68 homolog (Bles03) from Rattus norvegicus (Rat).